Reading from the N-terminus, the 203-residue chain is GTP-binding protein yptV1 (203 aa).

GTP-binding positions include 15–23, 33–40, 63–67, 121–124, and 151–153; these read GDSGVGKSC, YTESYIST, DTAGQ, NKSD, and SAK. Positions 37–45 match the Effector region motif; that stretch reads YISTIGVDF. Positions 173 to 203 are disordered; it reads MASQPVPPKPGGPVVRPTEGKPINNKSSSCC. S-geranylgeranyl cysteine attachment occurs at residues C202 and C203.

Belongs to the small GTPase superfamily. Rab family.

Its subcellular location is the cell membrane. Functionally, protein transport. Probably involved in vesicular traffic. The protein is GTP-binding protein yptV1 (YPTV1) of Volvox carteri (Green alga).